A 463-amino-acid chain; its full sequence is Quinolone resistance protein NorB (463 aa).

The next 14 helical transmembrane spans lie at 19-39 (IVLSVITFWLFAQSLVNVVLI), 53-73 (IAVSITALFSGMFVVGVGGLA), 86-106 (IILNILGSLLIIISNIPLLLI), 107-127 (IGRLIQGLSAACIMPATLSII), 142-162 (YWSIGSWGGSGVCSFFGGAVA), 165-185 (LGWRWIFILSIIISLIALFLI), 201-221 (FDIKGLVLLVIMLLSLNILIT), 230-250 (SLLFITLLAIAIGSFSLFIVL), 273-293 (TASNFLLNGVAGTLIVANTFV), 299-319 (YSLLQAGSLSITYLVMVLIMI), 334-354 (PMLIGTGVLIVGECLISLTFL), 357-377 (ILYVICCIIGYLFFGLGLGIY), 403-423 (MASALGGAFGVALSGAVYAIV), and 435-455 (IALWLNAGMAILSFVIILLLV).

This sequence belongs to the major facilitator superfamily. TCR/Tet family.

It is found in the cell membrane. Its function is as follows. Multidrug efflux pump that acts independently of NorA and is one of the factors that confers resistance against diverse quinolones and chemical compounds. The sequence is that of Quinolone resistance protein NorB (norB) from Staphylococcus aureus (strain bovine RF122 / ET3-1).